A 173-amino-acid polypeptide reads, in one-letter code: RNA polymerase sigma factor TcsR (173 aa).

The interval 122–169 is sigma-70 factor domain-4; it reads IKDLTQNEKNILRKIYLHGLRESEISRELNISRQAVNKTHLRALEKLK. Residues 143 to 162 constitute a DNA-binding region (H-T-H motif); it reads ESEISRELNISRQAVNKTHL.

The protein belongs to the sigma-70 factor family.

In terms of biological role, sigma factors are initiation factors that promote the attachment of RNA polymerase to specific initiation sites and are then released. Transcriptional regulator specifically required to activate expression of the toxin gene locus, composed of tcsL and tcdE/utxA. The sequence is that of RNA polymerase sigma factor TcsR from Paraclostridium sordellii (Clostridium sordellii).